The sequence spans 245 residues: 5-oxoprolinase subunit A (245 aa).

It belongs to the LamB/PxpA family. Forms a complex composed of PxpA, PxpB and PxpC.

It carries out the reaction 5-oxo-L-proline + ATP + 2 H2O = L-glutamate + ADP + phosphate + H(+). In terms of biological role, catalyzes the cleavage of 5-oxoproline to form L-glutamate coupled to the hydrolysis of ATP to ADP and inorganic phosphate. This chain is 5-oxoprolinase subunit A, found in Neisseria meningitidis serogroup A / serotype 4A (strain DSM 15465 / Z2491).